The sequence spans 290 residues: MEKAVSQFKDFVQSQHHDSYAAIQQADHRGHVVAITGASSGIGKAIAVSYGRCGVSALVLIARRPLDDVKSTVIAASVAAGHSPPEVMTVAANVADETSIYLAATKVKETLGHIDILVNNAGRVGTWGNVEAGEAQDWWQTWEVNIKGVYLTTRAFIPMLLQGKQKTIVNIGSMGVVSPVANLSAYLPSKLALIQFTNIVALEYSSQGLVAFTAYPGDVATELTGSFPEAMSPYFVDTPELPGDSIAWLTQRRLEWLSGRFVSLRWDLPELVSRQSEIVEGDKLRVTMRV.

NADP(+)-binding residues include Ile-35, Asn-120, Arg-154, Tyr-186, Lys-190, Val-219, and Thr-221. Tyr-186 (proton acceptor) is an active-site residue. Residue Lys-190 is the Lowers pKa of active site Tyr of the active site.

It belongs to the short-chain dehydrogenases/reductases (SDR) family.

The protein operates within secondary metabolite biosynthesis; terpenoid biosynthesis. Functionally, short chain dehydrogenase; part of the gene cluster that mediates the biosynthesis of anditomin, a fungal meroterpenoid. The first step of the pathway is the synthesis of 3,5-dimethylorsellinic acid (DMOA) by the polyketide synthase andM. DMOA is then converted to the phthalide compound 5,7-dihydroxy-4,6-dimethylphthalide (DHDMP) by the cytochrome P450 monooxygenase andK, which is further prenylated by the prenyltransferase andD to yield farnesyl-DHDMP. Further epoxidation by the FAD-dependent monooxygenase andE leads to epoxyfarnesyl-DHDMP. The next step involves the terpene cyclase andB that converts epoxyfarnesyl-DHDMP into preandiloid A through opening of the epoxide ring followed by the cyclization of the farnesyl moiety. Preandiloid A is in turn oxidized at the C-3 hydroxyl group to yield preandiloid B by the dehydrogenase andC. The dioxygenase andA is solely responsible for the dehydrogenation of preandiloid B leading to the enone preandiloid C, as well as for the intriguing structural rearrangement to generate the bicyclo[2.2.2]octane core, transforming preandiloid C into andiconin. FAD-binding monooxygenase andJ then produces andilesin D which is reduced by dehydrogenase andI to yield andilesin A. Action of acetyltransferase andG followed by a spontaneous acetate elimination leads then to andilesin B, which is in turn substrate of the short chain dehydrogenase andH to yield andilesin C. Finally, the dioxygenase andF catalyzes the transformation of andilesin C to anditomin. The protein is Short chain dehydrogenase andI of Emericella variicolor (Aspergillus stellatus).